We begin with the raw amino-acid sequence, 295 residues long: Probable CBASS effector molecule IK1_05631 (295 aa).

The next 4 membrane-spanning stretches (helical) occupy residues 26 to 46 (IFYA…ISIY), 56 to 76 (SNTG…AYQI), 167 to 187 (ILLF…GFFV), and 190 to 210 (SMQE…IYGF).

Its subcellular location is the cell membrane. Effector protein of a CBASS antiviral system. CBASS (cyclic oligonucleotide-based antiphage signaling system) provides immunity against bacteriophage. The CD-NTase protein synthesizes cyclic nucleotides in response to infection; these serve as specific second messenger signals. The signals activate a diverse range of effectors, leading to bacterial cell death and thus abortive phage infection. A type I-B CBASS system. In terms of biological role, protects B.subtilis against phage infection. When IK1_05630 and IK1_05631 are introduced in B.subtilis BEST7003 there is 1000-fold protection against phage SBSphiC. Both genes are required for protection. Activation leads to bacterial cell lysis and death, which occurs before the phage has finished its replication cycle, thus protecting non-infected bacteria by aborting the phage infection and preventing its propagation. This is Probable CBASS effector molecule IK1_05631 from Bacillus cereus (strain VD146).